A 564-amino-acid polypeptide reads, in one-letter code: Rhodopsin kinase GRK1 (564 aa).

Residues 1–15 (MDFGSLETVVANSAF) form an interaction with RCVRN region. The tract at residues 1–189 (MDFGSLETVV…LEAQPIGEDW (189 aa)) is N-terminal. Ser5 is modified (phosphoserine). Thr8 is modified (phosphothreonine). Ser21 carries the phosphoserine; by PKA and autocatalysis modification. The region spanning 58–175 (FDNLCSEQPI…LGSLYFLRFL (118 aa)) is the RGS domain. The 266-residue stretch at 190–455 (FLDFRVLGKG…CDALRANVLF (266 aa)) folds into the Protein kinase domain. Residues 196–204 (LGKGGFGEV) and Lys219 contribute to the ATP site. Asp317 serves as the catalytic Proton acceptor. An AGC-kinase C-terminal domain is found at 456–521 (KDISWRQLEA…GNCSIPWQEE (66 aa)). The segment at 456 to 564 (KDISWRQLEA…TAKSGMCLIS (109 aa)) is C-terminal. A Phosphoserine; by autocatalysis modification is found at Ser491. At Thr492 the chain carries Phosphothreonine; by autocatalysis. Cys561 bears the Cysteine methyl ester mark. Residue Cys561 is the site of S-farnesyl cysteine attachment. Positions 562–564 (LIS) are cleaved as a propeptide — removed in mature form.

The protein belongs to the protein kinase superfamily. AGC Ser/Thr protein kinase family. GPRK subfamily. Interacts (via N-terminus) with RCVRN (via C-terminus); the interaction is Ca(2+)-dependent. Interacts (when prenylated) with PDE6D; this promotes release from membranes. May form a complex composed of RHO, GRK1 and RCVRN in a Ca(2+)-dependent manner; RCVRN prevents the interaction between GRK1 and RHO. Autophosphorylated, Ser-21 is a minor site of autophosphorylation compared to Ser-491 and Thr-492. Phosphorylation at Ser-21 is regulated by light and activated by cAMP. Post-translationally, farnesylation is required for full activity. In terms of tissue distribution, detected in retina (at protein level). Retina-specific. Expressed in rod and cone photoreceptor cells.

Its subcellular location is the membrane. It localises to the cell projection. The protein localises to the cilium. It is found in the photoreceptor outer segment. It catalyses the reaction L-threonyl-[rhodopsin] + ATP = O-phospho-L-threonyl-[rhodopsin] + ADP + H(+). The enzyme catalyses L-seryl-[rhodopsin] + ATP = O-phospho-L-seryl-[rhodopsin] + ADP + H(+). With respect to regulation, inhibited by RCVRN, which prevents the interaction between GRK1 and RHO. Inhibition is calcium-dependent. In terms of biological role, retina-specific kinase involved in the signal turnoff via phosphorylation of rhodopsin (RHO), the G protein- coupled receptor that initiates the phototransduction cascade. This rapid desensitization is essential for scotopic vision and permits rapid adaptation to changes in illumination. May play a role in the maintenance of the outer nuclear layer in the retina. This is Rhodopsin kinase GRK1 from Rattus norvegicus (Rat).